The chain runs to 361 residues: MQPRDLSAHAPYVPGRGTEEVARELGMDPEDLTKLSSNENPHGPSPKAVAAIEDAAPTVSVYPKTAHTDLTERLADKWGLAPEQVWVSPGADGSIDYLTRAVLEPDDRILEPAPGFSYYSMSARYHHGDAVQYEVSKDDDFEQTADLVLDAYDGERMVYLTTPHNPTGSVLPREELVELAESVEEHTLLVVDEAYGEFAEEPSAIDLLSEYDNVAALRTFSKAYGLAGLRIGYACVPEAWADAYARVNTPFAASEVACRAALAALDDEEHVEKSVESARWSRDYLREHLDAPTWESEGNFVLVEVGDATAVTEAAQREGVIVRDCGSFGLPECIRVSCGTETQTKRAVDVLNRIVSEVPTA.

The interval 26-45 (GMDPEDLTKLSSNENPHGPS) is disordered. An N6-(pyridoxal phosphate)lysine modification is found at Lys222.

The protein belongs to the class-II pyridoxal-phosphate-dependent aminotransferase family. Histidinol-phosphate aminotransferase subfamily. Pyridoxal 5'-phosphate serves as cofactor.

It catalyses the reaction L-histidinol phosphate + 2-oxoglutarate = 3-(imidazol-4-yl)-2-oxopropyl phosphate + L-glutamate. It participates in amino-acid biosynthesis; L-histidine biosynthesis; L-histidine from 5-phospho-alpha-D-ribose 1-diphosphate: step 7/9. This Haloferax volcanii (strain ATCC 29605 / DSM 3757 / JCM 8879 / NBRC 14742 / NCIMB 2012 / VKM B-1768 / DS2) (Halobacterium volcanii) protein is Histidinol-phosphate aminotransferase (hisC).